Consider the following 319-residue polypeptide: Cytochrome f (319 aa).

The first 34 residues, 1 to 34 (MQNRNTYDLKKKMTRLISVLVMIHIITRTSISNA), serve as a signal peptide directing secretion. Heme-binding residues include Tyr35, Cys55, Cys58, and His59. The helical transmembrane segment at 285-304 (VKGLLLFLASVILAQIFLVL) threads the bilayer.

The protein belongs to the cytochrome f family. In terms of assembly, the 4 large subunits of the cytochrome b6-f complex are cytochrome b6, subunit IV (17 kDa polypeptide, petD), cytochrome f and the Rieske protein, while the 4 small subunits are PetG, PetL, PetM and PetN. The complex functions as a dimer. Heme is required as a cofactor.

The protein resides in the plastid. It localises to the chloroplast thylakoid membrane. In terms of biological role, component of the cytochrome b6-f complex, which mediates electron transfer between photosystem II (PSII) and photosystem I (PSI), cyclic electron flow around PSI, and state transitions. In Picea abies (Norway spruce), this protein is Cytochrome f (petA).